The sequence spans 446 residues: Glutamine synthetase (446 aa).

Positions 18 to 103 constitute a GS beta-grasp domain; it reads ENVRYLRLQF…LICDVYKTDG (86 aa). The region spanning 110-446 is the GS catalytic domain; that stretch reads PRANLKRVLK…WERDQYMKQY (337 aa). Mg(2+) is bound by residues E134 and E136. An ATP-binding site is contributed by E186. Mg(2+) is bound by residues E191 and E198. Residues 242–243 and G243 contribute to the L-glutamate site; that span reads NG. H247 serves as a coordination point for Mg(2+). Residue S251 coordinates ATP. R300, E306, and R318 together coordinate L-glutamate. R318 and R323 together coordinate ATP. A Mg(2+)-binding site is contributed by E335. An L-glutamate-binding site is contributed by R337.

It belongs to the glutamine synthetase family. In terms of assembly, oligomer of 12 subunits arranged in the form of two hexagons. In its feedback-inhibited form, interacts with TnrA in order to block its DNA-binding activity. It depends on Mg(2+) as a cofactor.

The protein localises to the cytoplasm. It catalyses the reaction L-glutamate + NH4(+) + ATP = L-glutamine + ADP + phosphate + H(+). With respect to regulation, inhibited by glutamine. Its function is as follows. Glutamine synthetase (GS) is an unusual multitasking protein that functions as an enzyme, a transcription coregulator, and a chaperone in ammonium assimilation and in the regulation of genes involved in nitrogen metabolism. It catalyzes the ATP-dependent biosynthesis of glutamine from glutamate and ammonia. Feedback-inhibited GlnA also interacts with and regulates the activity of the transcriptional regulator TnrA. During nitrogen limitation, TnrA is in its DNA-binding active state and turns on the transcription of genes required for nitrogen assimilation. Under conditions of nitrogen excess, feedback-inhibited GlnA forms a stable complex with TnrA, which inhibits its DNA-binding activity. In contrast, feedback-inhibited GlnA acts as a chaperone to stabilize the DNA-binding activity of GlnR, which represses the transcription of nitrogen assimilation genes. The chain is Glutamine synthetase from Staphylococcus aureus (strain MSSA476).